A 223-amino-acid chain; its full sequence is Cytidylate kinase (223 aa).

Residue 10-18 (GPASSGKST) coordinates ATP.

The protein belongs to the cytidylate kinase family. Type 1 subfamily.

Its subcellular location is the cytoplasm. The enzyme catalyses CMP + ATP = CDP + ADP. It carries out the reaction dCMP + ATP = dCDP + ADP. This is Cytidylate kinase from Streptococcus pneumoniae (strain Hungary19A-6).